Here is a 455-residue protein sequence, read N- to C-terminus: Bifunctional protein GlmU (455 aa).

The pyrophosphorylase stretch occupies residues 1–228; the sequence is MTQPLHVIIL…AQEAEGANDP (228 aa). UDP-N-acetyl-alpha-D-glucosamine-binding positions include 10-13, K24, Q76, 81-82, 103-105, G138, E153, N168, and N226; these read LAAG, GT, and YGD. Residue D105 coordinates Mg(2+). A Mg(2+)-binding site is contributed by N226. The tract at residues 229 to 249 is linker; that stretch reads WQLSQLERAWQRRAVRALCAQ. The tract at residues 250–455 is N-acetyltransferase; that stretch reads GARVRDPARL…DGWKRPLKKS (206 aa). UDP-N-acetyl-alpha-D-glucosamine is bound by residues R332 and K350. H362 functions as the Proton acceptor in the catalytic mechanism. UDP-N-acetyl-alpha-D-glucosamine-binding residues include Y365 and N376. Acetyl-CoA is bound by residues A379, 385-386, S404, A422, and R439; that span reads NY.

It in the N-terminal section; belongs to the N-acetylglucosamine-1-phosphate uridyltransferase family. This sequence in the C-terminal section; belongs to the transferase hexapeptide repeat family. Homotrimer. Requires Mg(2+) as cofactor.

The protein resides in the cytoplasm. The enzyme catalyses alpha-D-glucosamine 1-phosphate + acetyl-CoA = N-acetyl-alpha-D-glucosamine 1-phosphate + CoA + H(+). It catalyses the reaction N-acetyl-alpha-D-glucosamine 1-phosphate + UTP + H(+) = UDP-N-acetyl-alpha-D-glucosamine + diphosphate. The protein operates within nucleotide-sugar biosynthesis; UDP-N-acetyl-alpha-D-glucosamine biosynthesis; N-acetyl-alpha-D-glucosamine 1-phosphate from alpha-D-glucosamine 6-phosphate (route II): step 2/2. It participates in nucleotide-sugar biosynthesis; UDP-N-acetyl-alpha-D-glucosamine biosynthesis; UDP-N-acetyl-alpha-D-glucosamine from N-acetyl-alpha-D-glucosamine 1-phosphate: step 1/1. It functions in the pathway bacterial outer membrane biogenesis; LPS lipid A biosynthesis. Catalyzes the last two sequential reactions in the de novo biosynthetic pathway for UDP-N-acetylglucosamine (UDP-GlcNAc). The C-terminal domain catalyzes the transfer of acetyl group from acetyl coenzyme A to glucosamine-1-phosphate (GlcN-1-P) to produce N-acetylglucosamine-1-phosphate (GlcNAc-1-P), which is converted into UDP-GlcNAc by the transfer of uridine 5-monophosphate (from uridine 5-triphosphate), a reaction catalyzed by the N-terminal domain. This is Bifunctional protein GlmU from Stenotrophomonas maltophilia (strain R551-3).